Consider the following 288-residue polypeptide: Phosphopantetheinyl transferase (288 aa).

CoA is bound by residues Arg60, 99–104, and 118–121; these read RTEMGK and NLSH. Mg(2+) contacts are provided by Asp139 and Glu196. A CoA-binding site is contributed by 196–200; sequence EAYLK.

Belongs to the P-Pant transferase superfamily. AcpS family. Monomer.

Its subcellular location is the cytoplasm. It is found in the cytosol. The catalysed reaction is apo-[ACP] + CoA = holo-[ACP] + adenosine 3',5'-bisphosphate + H(+). It participates in lipid metabolism; fatty acid biosynthesis. Functionally, phosphopantetheinyl transferase that is essential for attaching phosphopantetheine to ACP domains of the polyunsaturated fatty acid (PUFA) synthase converting the inactive apo-synthase to the active holo-synthase. This Thraustochytrium sp. (strain ATCC 26185 / S-3) protein is Phosphopantetheinyl transferase.